The primary structure comprises 419 residues: Glycine, glutamate and proline-rich protein (419 aa).

The N-terminal stretch at 1-16 (MKCLVALFLSLSLVAC) is a signal peptide. The tract at residues 74–152 (VERESEEAEG…VDMCAGESRR (79 aa)) is disordered. Residues 76–85 (RESEEAEGEG) show a composition bias toward acidic residues. Over residues 86-130 (TDGRGGGEGEREGWGGEREGGEGEREGGEGEREGREGEREGKSSE) the composition is skewed to basic and acidic residues.

In the C-terminal section; belongs to the glycosyl hydrolase 23 family. Component of the acid-insoluble organic matrix of calcified layers of the shell (at protein level).

The protein resides in the secreted. The chain is Glycine, glutamate and proline-rich protein from Lottia gigantea (Giant owl limpet).